The following is a 310-amino-acid chain: ATP phosphoribosyltransferase (310 aa).

Belongs to the ATP phosphoribosyltransferase family.

Its subcellular location is the cytoplasm. The enzyme catalyses 1-(5-phospho-beta-D-ribosyl)-ATP + diphosphate = 5-phospho-alpha-D-ribose 1-diphosphate + ATP. It participates in amino-acid biosynthesis; L-histidine biosynthesis; L-histidine from 5-phospho-alpha-D-ribose 1-diphosphate: step 1/9. Functionally, catalyzes the condensation of ATP and 5-phosphoribose 1-diphosphate to form N'-(5'-phosphoribosyl)-ATP (PR-ATP). Has a crucial role in the pathway because the rate of histidine biosynthesis seems to be controlled primarily by regulation of HisG enzymatic activity. This chain is ATP phosphoribosyltransferase (his1), found in Schizosaccharomyces pombe (strain 972 / ATCC 24843) (Fission yeast).